The following is a 450-amino-acid chain: Putative gustatory receptor 28a (450 aa).

Topologically, residues 1–47 (MAFKLWERFSQADNVFQALRPLTFISLLGLAPFRLNLNPRKEVQTSK) are cytoplasmic. The helical transmembrane segment at 48-68 (FSFFAGIVHFLFFVLCFGISV) threads the bilayer. Over 69-87 (KEGDSIIGYFFQTNITRFS) the chain is Extracellular. Residue Asn-82 is glycosylated (N-linked (GlcNAc...) asparagine). Residues 88–108 (DGTLRLTGILAMSTIFGFAMF) form a helical membrane-spanning segment. Residues 109 to 138 (KRQRLVSIIQNNIVVDEIFVRLGMKLDYRR) are Cytoplasmic-facing. Residues 139-159 (ILLSSFLISLGMLLFNVIYLC) form a helical membrane-spanning segment. The Extracellular portion of the chain corresponds to 160-171 (VSYSLLVSATIS). Residues 172-192 (PSFVTFTTFALPHINISLMVF) traverse the membrane as a helical segment. Over 193–292 (KFLCTTDLAR…CQTIEEYFTY (100 aa)) the chain is Cytoplasmic. Residues 293–313 (PLLGIIAISFLFILFDDFYIL) traverse the membrane as a helical segment. Residues 314–329 (EAILNPKRLDVFEADE) are Extracellular-facing. Residues 330–350 (FFAFFLMQLIWYIVIIVLIVE) traverse the membrane as a helical segment. Topologically, residues 351–407 (GSSRTILHSSYTAAIVHKILNITDDPELRDRLFRLSLQLSHRKVLFTAAGLFRLDRT) are cytoplasmic. Residues 408-424 (LIFTITGAATCYLIILI) traverse the membrane as a helical segment. The Extracellular segment spans residues 425–450 (QFRFTHHMDDTSSNSTNNLHSIHLGD). A glycan (N-linked (GlcNAc...) asparagine) is linked at Asn-438.

The protein belongs to the insect chemoreceptor superfamily. Gustatory receptor (GR) family. Gr2a subfamily. In terms of tissue distribution, in addition to expression in a large number of taste neurons, Gr28a is also expressed in a few nonchemosensory neurons, including the campaniform sensilla of the wing, leg stretch receptors, and multiple dendritic (MD) neurons in the abdomen. In larvea, is expressed in neurons of the terminal external chemosensory organ, the dorsal external chemosensory organ, as well as in the ventral and posterior pharyngeal sense organ.

Its subcellular location is the cell membrane. Functionally, probable gustatory receptor which mediates acceptance or avoidance behavior, depending on its substrates. Atypical expression also suggests nongustatory roles in the nervous system and tissues involved in proprioception, hygroreception, and other sensory modalities. It is also possible that it has chemosensory roles in the detection of internal ligands. The protein is Putative gustatory receptor 28a (Gr28a) of Drosophila melanogaster (Fruit fly).